Reading from the N-terminus, the 258-residue chain is Spectinomycin 9-adenylyltransferase (258 aa).

It carries out the reaction spectinomycin + ATP = 9-O-adenylylspectinomycin + diphosphate. Mediates bacterial resistance to spectinomycin, is probably a spectinomycin 9-adenylyltransferase. This is Spectinomycin 9-adenylyltransferase from Campylobacter jejuni.